The following is a 36-amino-acid chain: Photosystem I reaction center subunit VIII (36 aa).

Residues 9-29 (ILVPLVGLVFPAITMVSLFLY) form a helical membrane-spanning segment.

This sequence belongs to the PsaI family.

It is found in the plastid. The protein resides in the chloroplast thylakoid membrane. May help in the organization of the PsaL subunit. This Zygnema circumcarinatum (Green alga) protein is Photosystem I reaction center subunit VIII.